Consider the following 244-residue polypeptide: CTD nuclear envelope phosphatase 1 (244 aa).

A helical membrane pass occupies residues 7 to 29; that stretch reads LLGLRTFVAFAAKLWSFFIYLLR. In terms of domain architecture, FCP1 homology spans 57–224; it reads AQVKRKILVL…LNLLPMLDAL (168 aa).

Belongs to the dullard family. As to quaternary structure, interacts with CNEP1R1; the complex dephosphorylates LPIN1 and LPIN2. In terms of tissue distribution, muscle specific with lower expression in other metabolic tissues.

It is found in the endoplasmic reticulum membrane. It localises to the nucleus membrane. It catalyses the reaction O-phospho-L-seryl-[protein] + H2O = L-seryl-[protein] + phosphate. The enzyme catalyses O-phospho-L-threonyl-[protein] + H2O = L-threonyl-[protein] + phosphate. In terms of biological role, serine/threonine protein phosphatase forming with CNEP1R1 an active phosphatase complex that dephosphorylates and may activate LPIN1 and LPIN2. LPIN1 and LPIN2 are phosphatidate phosphatases that catalyze the conversion of phosphatidic acid to diacylglycerol and control the metabolism of fatty acids at different levels. May indirectly modulate the lipid composition of nuclear and/or endoplasmic reticulum membranes and be required for proper nuclear membrane morphology and/or dynamics. May also indirectly regulate the production of lipid droplets and triacylglycerol. May antagonize BMP signaling. The chain is CTD nuclear envelope phosphatase 1 (Ctdnep1) from Mus musculus (Mouse).